A 373-amino-acid chain; its full sequence is S-adenosylmethionine:tRNA ribosyltransferase-isomerase (373 aa).

The protein belongs to the QueA family. Monomer.

It is found in the cytoplasm. The enzyme catalyses 7-aminomethyl-7-carbaguanosine(34) in tRNA + S-adenosyl-L-methionine = epoxyqueuosine(34) in tRNA + adenine + L-methionine + 2 H(+). It participates in tRNA modification; tRNA-queuosine biosynthesis. Functionally, transfers and isomerizes the ribose moiety from AdoMet to the 7-aminomethyl group of 7-deazaguanine (preQ1-tRNA) to give epoxyqueuosine (oQ-tRNA). The polypeptide is S-adenosylmethionine:tRNA ribosyltransferase-isomerase (Caulobacter sp. (strain K31)).